The chain runs to 174 residues: Small ribosomal subunit protein uS5 (174 aa).

The S5 DRBM domain maps to 19-82; sequence LREKMIAVNR…EQARRGMFKV (64 aa).

This sequence belongs to the universal ribosomal protein uS5 family. In terms of assembly, part of the 30S ribosomal subunit. Contacts proteins S4 and S8.

Functionally, with S4 and S12 plays an important role in translational accuracy. In terms of biological role, located at the back of the 30S subunit body where it stabilizes the conformation of the head with respect to the body. This chain is Small ribosomal subunit protein uS5, found in Bordetella bronchiseptica (strain ATCC BAA-588 / NCTC 13252 / RB50) (Alcaligenes bronchisepticus).